Consider the following 173-residue polypeptide: Crossover junction endodeoxyribonuclease RuvC (173 aa).

Residues aspartate 11, glutamate 71, and aspartate 143 contribute to the active site. Residues aspartate 11, glutamate 71, and aspartate 143 each coordinate Mg(2+).

Belongs to the RuvC family. In terms of assembly, homodimer which binds Holliday junction (HJ) DNA. The HJ becomes 2-fold symmetrical on binding to RuvC with unstacked arms; it has a different conformation from HJ DNA in complex with RuvA. In the full resolvosome a probable DNA-RuvA(4)-RuvB(12)-RuvC(2) complex forms which resolves the HJ. Mg(2+) is required as a cofactor.

The protein resides in the cytoplasm. The catalysed reaction is Endonucleolytic cleavage at a junction such as a reciprocal single-stranded crossover between two homologous DNA duplexes (Holliday junction).. Its function is as follows. The RuvA-RuvB-RuvC complex processes Holliday junction (HJ) DNA during genetic recombination and DNA repair. Endonuclease that resolves HJ intermediates. Cleaves cruciform DNA by making single-stranded nicks across the HJ at symmetrical positions within the homologous arms, yielding a 5'-phosphate and a 3'-hydroxyl group; requires a central core of homology in the junction. The consensus cleavage sequence is 5'-(A/T)TT(C/G)-3'. Cleavage occurs on the 3'-side of the TT dinucleotide at the point of strand exchange. HJ branch migration catalyzed by RuvA-RuvB allows RuvC to scan DNA until it finds its consensus sequence, where it cleaves and resolves the cruciform DNA. The chain is Crossover junction endodeoxyribonuclease RuvC from Brucella suis (strain ATCC 23445 / NCTC 10510).